The chain runs to 222 residues: MAARPKLHYPNGRGRMESVRWVLAAAGVEFDEEFLETKEQLYKLQDGNHLLFQQVPMVEIDGMKLVQTRSILHYIADKHNLFGKNLKERTLIDMYVEGTLDLLELLIMHPFLKPDDQQKEVVNMAQKAIIRYFPVFEKILRGHGQSFLVGNQLSLADVILLQTILALEEKIPNILSAFPFLQEYTVKLSNIPTIKRFLEPGSKKKPPPDEIYVRTVYNIFRP.

Met1 carries the N-acetylmethionine modification. Residues 3–83 (ARPKLHYPNG…YIADKHNLFG (81 aa)) form the GST N-terminal domain. Glutathione is bound by residues Tyr9, 54–55 (QV), and 67–68 (QT). A GST C-terminal domain is found at 85-208 (NLKERTLIDM…EPGSKKKPPP (124 aa)). Substrate is bound at residue Tyr212.

It belongs to the GST superfamily. Alpha family. In terms of assembly, homodimer. Expressed at a high level in brain, placenta, and skeletal muscle and much lower in lung and liver.

Its subcellular location is the cytoplasm. It catalyses the reaction RX + glutathione = an S-substituted glutathione + a halide anion + H(+). In terms of biological role, conjugation of reduced glutathione to a wide number of exogenous and endogenous hydrophobic electrophiles. This isozyme has a high catalytic efficiency with 4-hydroxyalkenals such as 4-hydroxynonenal (4-HNE). In Homo sapiens (Human), this protein is Glutathione S-transferase A4 (GSTA4).